Consider the following 473-residue polypeptide: MTIFFSVEILVLGIAEFAAIAMDAAQQGDTTTILMLPWLGYGHLSAFLELAKSLSRRNFHIYFCSTSVNLDAIKPKLPSSFSDSIQFVELHLPSSPEFPPHLHTTNGLPPTLMPALHQAFSMAAQHFESILQTLAPHLLIYDSLQPWAPRVASSLKIPAINFNTTGVFVISQGLHPIHYPHSKFPFSEFVLHNHWKAMYSTADGASTERTRKRGEAFLYCLHASCSVILINSFRELEGKYMDYLSVLLNKKVVPVGPLVYEPNQDGEDEGYSSIKNWLDKKEPSSTVFVSFGSEYFPSKEEMEEIAHGLEASEVNFIWVVRFPQGDNTSGIEDALPKGFLERAGERGMVVKGWAPQAKILKHWSTGGFVSHCGWNSVMESMMFGVPIIGVPMHVDQPFNAGLVEEAGVGVEAKRDPDGKIQRDEVAKLIKEVVVEKTREDVRKKAREMSEILRSKGEEKFDEMVAEISLLLKI.

His-43 acts as the Proton acceptor in catalysis. Catalysis depends on Asp-142, which acts as the Charge relay. UDP-alpha-D-glucose is bound by residues Ser-293, Gln-356, Trp-374, Asn-375, Ser-376, Glu-379, Asp-395, and Gln-396.

The protein belongs to the UDP-glycosyltransferase family. Highly expressed in mature fruits.

It catalyses the reaction mogroside IIE + UDP-alpha-D-glucose = mogroside IIIX + UDP + H(+). It carries out the reaction mogroside III + UDP-alpha-D-glucose = mogroside IV + UDP + H(+). The catalysed reaction is mogroside III + UDP-alpha-D-glucose = siamenoside I + UDP + H(+). The enzyme catalyses mogroside IIIX + UDP-alpha-D-glucose = mogroside IVA + UDP + H(+). It catalyses the reaction mogroside IIIX + UDP-alpha-D-glucose = siamenoside I + UDP + H(+). It carries out the reaction mogroside IV + UDP-alpha-D-glucose = mogroside V + UDP + H(+). The catalysed reaction is siamenoside I + UDP-alpha-D-glucose = mogroside V + UDP + H(+). The enzyme catalyses mogroside V + UDP-alpha-D-glucose = mogroside VI + UDP + H(+). It participates in secondary metabolite biosynthesis; terpenoid biosynthesis. Activity is increased by Mg(2+). In terms of biological role, UDP-glycosyltransferase involved in the biosynthesis of cucurbitacin and mogroside tetracyclic triterpene natural products (e.g. siamenoside I and mogrosides IV, V and VI). Cucurbitacins have cytotoxic properties and exhibit deterrent taste as a defense barrier against herbivores. Mogrosides are nonsugar highly oxygenated compounds used as high-intensity zero-calorie sweeteners; they also possess pharmacological properties such as regulating immunity, lowering blood sugar and lipid levels, protecting the liver, and acting as antioxidants and antitumor agents. Functionally, catalyzes the branched glucosylations of mogroside II-E, mogroside III, mogroside IIIx, mogroside IV, mogroside IV-A, siamenoside I and mogroside V, ending in the production of mogroside VI. Catalyzes the beta(1-6) branched glucosylations of mogroside II-E to produce mogroside IIIx by forming a beta(1-6) glycosidic bond with the 6-hydroxyl of glucose 1-C24; a subsequent glycosylation at glucose 1-C3 leads to the formation of mogroside IV-A with beta(1-6) glycosidic bond. Can also use mogroside III-E, mogroside III-A, mogroside IV-E and mogroside IV-A as substrates. This chain is Mogroside IIIx synthase, found in Siraitia grosvenorii (Monk's fruit).